We begin with the raw amino-acid sequence, 224 residues long: IAP-like protein p27 (224 aa).

One copy of the BIR repeat lies at 29 to 92; sequence VDARNQSFAI…GFWSRNCGFM (64 aa). Positions 62, 65, 82, and 89 each coordinate Zn(2+).

Not essential for growth or virulence. Does not have antiapoptotic function. This is IAP-like protein p27 (p27) from Ornithodoros (relapsing fever ticks).